Consider the following 253-residue polypeptide: Small ribosomal subunit protein uS3 (253 aa).

One can recognise a KH type-2 domain in the interval 39-107 (VRRALKKRLY…EVHLNIVEIR (69 aa)). The tract at residues 215-253 (LDKRLAGESGPAGEGGGRERGDRPDRGPRRERRGEPSNA) is disordered. The span at 230-253 (GGRERGDRPDRGPRRERRGEPSNA) shows a compositional bias: basic and acidic residues.

This sequence belongs to the universal ribosomal protein uS3 family. In terms of assembly, part of the 30S ribosomal subunit. Forms a tight complex with proteins S10 and S14.

In terms of biological role, binds the lower part of the 30S subunit head. Binds mRNA in the 70S ribosome, positioning it for translation. This is Small ribosomal subunit protein uS3 from Phenylobacterium zucineum (strain HLK1).